The chain runs to 1015 residues: Beta-galactosidase (1015 aa).

Catalysis depends on glutamate 434, which acts as the Proton donor. The active-site Nucleophile is glutamate 513.

The protein belongs to the glycosyl hydrolase 2 family. It depends on Mg(2+) as a cofactor. Mn(2+) is required as a cofactor.

It carries out the reaction Hydrolysis of terminal non-reducing beta-D-galactose residues in beta-D-galactosides.. The sequence is that of Beta-galactosidase (lacZ) from Arthrobacter sp. (strain B7).